Here is a 1126-residue protein sequence, read N- to C-terminus: Replication protein 1a (1126 aa).

A methyltransferase region spans residues 69–406 (SFSLDATQQN…HTIIGGVTLI (338 aa)). The 189-residue stretch at 90–278 (VFSNSSSSSH…HRFSLLKHYL (189 aa)) folds into the Alphavirus-like MT domain. Residues 806 to 963 (DQSCVFASAE…HKLTGKVERK (158 aa)) enclose the (+)RNA virus helicase ATP-binding domain. Residues 834–1094 (TIVDGVAGCG…RHKKTFKYFT (261 aa)) form an ATP-dependent helicase region. 838–845 (GVAGCGKT) serves as a coordination point for ATP. The region spanning 964-1125 (LITWRSPADA…SILARSYNHN (162 aa)) is the (+)RNA virus helicase C-terminal domain.

The protein belongs to the bromoviridae replication protein 1a family. In terms of assembly, interacts with RNA-directed RNA polymerase 2a.

The protein resides in the host endoplasmic reticulum membrane. Its function is as follows. Involved in the virus replication. Contains a helicase domain and a methyltransferase domain. The methyltransferase domain is probably involved in viral RNA capping. Involved in the formation of ER membrane spherular invaginations in which RNA replication complexes form. The polypeptide is Replication protein 1a (Alfalfa mosaic virus (AMV)).